Reading from the N-terminus, the 311-residue chain is HPr kinase/phosphorylase (311 aa).

Catalysis depends on residues histidine 138 and lysine 159. 153–160 is an ATP binding site; it reads GDSGIGKS. Serine 160 serves as a coordination point for Mg(2+). Aspartate 177 (proton acceptor; for phosphorylation activity. Proton donor; for dephosphorylation activity) is an active-site residue. Positions 201-210 are important for the catalytic mechanism of both phosphorylation and dephosphorylation; it reads LEIRGVGIID. Glutamate 202 contacts Mg(2+). Residue arginine 243 is part of the active site. An important for the catalytic mechanism of dephosphorylation region spans residues 264-269; that stretch reads PVKTGR.

The protein belongs to the HPrK/P family. As to quaternary structure, homohexamer. Requires Mg(2+) as cofactor.

It catalyses the reaction [HPr protein]-L-serine + ATP = [HPr protein]-O-phospho-L-serine + ADP + H(+). The enzyme catalyses [HPr protein]-O-phospho-L-serine + phosphate + H(+) = [HPr protein]-L-serine + diphosphate. Its function is as follows. Catalyzes the ATP- as well as the pyrophosphate-dependent phosphorylation of a specific serine residue in HPr, a phosphocarrier protein of the phosphoenolpyruvate-dependent sugar phosphotransferase system (PTS). HprK/P also catalyzes the pyrophosphate-producing, inorganic phosphate-dependent dephosphorylation (phosphorolysis) of seryl-phosphorylated HPr (P-Ser-HPr). The two antagonistic activities of HprK/P are regulated by several intracellular metabolites, which change their concentration in response to the absence or presence of rapidly metabolisable carbon sources (glucose, fructose, etc.) in the growth medium. Therefore, by controlling the phosphorylation state of HPr, HPrK/P is a sensor enzyme that plays a major role in the regulation of carbon metabolism and sugar transport: it mediates carbon catabolite repression (CCR), and regulates PTS-catalyzed carbohydrate uptake and inducer exclusion. This is HPr kinase/phosphorylase from Streptococcus agalactiae serotype Ia (strain ATCC 27591 / A909 / CDC SS700).